A 213-amino-acid polypeptide reads, in one-letter code: Phosphatidylethanolamine N-methyltransferase A (213 aa).

Topologically, residues 1 to 21 (MIVEHAIDYIDYLMNYVDFTE) are lumenal. An intramembrane region (helical) is located at residues 22-42 (KYFLLTIACVVFNPTWWNITA). Residues 43–54 (RMEYKTKFMTKI) lie on the Lumenal side of the membrane. The chain crosses the membrane as a helical span at residues 55–75 (CGSKENGCYLLAFLIFSLGIL). The Cytoplasmic segment spans residues 76–102 (RDWLFSEALIRQPIFQEFDRFEVEVLS). Residues 103–123 (YILYGFGGILVLAAYLKLGIT) traverse the membrane as a helical segment. 107 to 109 (GFG) is a binding site for S-adenosyl-L-methionine. Topologically, residues 124 to 166 (GTYLGDYFGILMKERVTGFPFNVMNNPMYNGSVMLFIAHALSY) are lumenal. The chain crosses the membrane as a helical span at residues 167–187 (KSVAGLVLSFVVYVVYKFALI). Residues 188–213 (FEESFTNYIYSTAAANAAKKNKSKSK) lie on the Cytoplasmic side of the membrane. Residue 189–190 (EE) participates in S-adenosyl-L-methionine binding.

The protein belongs to the class VI-like SAM-binding methyltransferase superfamily. PEMT/PEM2 methyltransferase family.

The protein localises to the endoplasmic reticulum membrane. The protein resides in the mitochondrion membrane. The catalysed reaction is a 1,2-diacyl-sn-glycero-3-phospho-N-methylethanolamine + S-adenosyl-L-methionine = a 1,2-diacyl-sn-glycero-3-phospho-N,N-dimethylethanolamine + S-adenosyl-L-homocysteine + H(+). The enzyme catalyses a 1,2-diacyl-sn-glycero-3-phospho-N,N-dimethylethanolamine + S-adenosyl-L-methionine = a 1,2-diacyl-sn-glycero-3-phosphocholine + S-adenosyl-L-homocysteine + H(+). It catalyses the reaction a 1,2-diacyl-sn-glycero-3-phosphoethanolamine + S-adenosyl-L-methionine = a 1,2-diacyl-sn-glycero-3-phospho-N-methylethanolamine + S-adenosyl-L-homocysteine + H(+). It functions in the pathway phospholipid metabolism; phosphatidylcholine biosynthesis. In terms of biological role, catalyzes the three sequential steps of the methylation pathway of phosphatidylcholine biosynthesis, the SAM-dependent methylation of phosphatidylethanolamine (PE) to phosphatidylmonomethylethanolamine (PMME), PMME to phosphatidyldimethylethanolamine (PDME), and PDME to phosphatidylcholine (PC). The polypeptide is Phosphatidylethanolamine N-methyltransferase A (pemtA) (Dictyostelium discoideum (Social amoeba)).